A 519-amino-acid chain; its full sequence is Glutamate--cysteine ligase (519 aa).

Belongs to the glutamate--cysteine ligase type 1 family. Type 1 subfamily.

It carries out the reaction L-cysteine + L-glutamate + ATP = gamma-L-glutamyl-L-cysteine + ADP + phosphate + H(+). It participates in sulfur metabolism; glutathione biosynthesis; glutathione from L-cysteine and L-glutamate: step 1/2. This Photorhabdus laumondii subsp. laumondii (strain DSM 15139 / CIP 105565 / TT01) (Photorhabdus luminescens subsp. laumondii) protein is Glutamate--cysteine ligase.